A 587-amino-acid chain; its full sequence is Arginine--tRNA ligase (587 aa).

Positions 127–137 match the 'HIGH' region motif; sequence PNLAKEMHVGH.

It belongs to the class-I aminoacyl-tRNA synthetase family. In terms of assembly, monomer.

The protein localises to the cytoplasm. The enzyme catalyses tRNA(Arg) + L-arginine + ATP = L-arginyl-tRNA(Arg) + AMP + diphosphate. This Pseudomonas aeruginosa (strain UCBPP-PA14) protein is Arginine--tRNA ligase.